We begin with the raw amino-acid sequence, 674 residues long: Inactivation-no-after-potential D protein (674 aa).

The region spanning 17–106 (MVTLDKTGKK…KIELEIQTFD (90 aa)) is the PDZ 1 domain. Residues 133-192 (QTTNNNASGGQGMGQGQGQGQGMAGMNRQQSMQKRNTTFTASMRQKHSNYADEDDEDTRD) are disordered. The span at 141 to 155 (GGQGMGQGQGQGQGM) shows a compositional bias: gly residues. The span at 159–175 (NRQQSMQKRNTTFTASM) shows a compositional bias: polar residues. 2 PDZ domains span residues 249–332 (RIEV…TSRR) and 364–448 (ARTV…LTLK). Over residues 458–475 (AAEEKKKEEAKKEEEKPQ) the composition is skewed to basic and acidic residues. Residues 458–481 (AAEEKKKEEAKKEEEKPQEPATAE) are disordered. PDZ domains lie at 489–577 (LIEL…RADP) and 584–664 (NVDL…TRPK). A phosphoserine mark is found at Ser-598 and Ser-600.

In terms of assembly, interacts with the C-terminus of trp, and with norpA and inaC to form the inaD signaling complex. Interacts with Fkbp59, which together with trpl, rhodopsin and calmodulin may also be part of the inaD complex. Post-translationally, phosphorylated by inaC. In terms of tissue distribution, expressed in photoreceptor cells (R cells) of the compound eyes and ocelli.

Its subcellular location is the cell projection. The protein resides in the rhabdomere. Involved in the negative feedback regulation of the light-activated signaling cascade in photoreceptors through a calcium-mediated process. Interacts with tetrapeptide ligand located in C-terminal sequence of 3 key components of the visual cascade, tethering them and forming a macromolecular signaling phototransduction complex. This is Inactivation-no-after-potential D protein (inaD) from Drosophila melanogaster (Fruit fly).